Here is a 79-residue protein sequence, read N- to C-terminus: Cell division protein ZapB (79 aa).

Residues 3 to 79 (LEVFEKLEAK…QALLGRMEEV (77 aa)) are a coiled coil.

The protein belongs to the ZapB family. As to quaternary structure, homodimer. The ends of the coiled-coil dimer bind to each other, forming polymers. Interacts with FtsZ.

It is found in the cytoplasm. Functionally, non-essential, abundant cell division factor that is required for proper Z-ring formation. It is recruited early to the divisome by direct interaction with FtsZ, stimulating Z-ring assembly and thereby promoting cell division earlier in the cell cycle. Its recruitment to the Z-ring requires functional FtsA or ZipA. This Salmonella typhi protein is Cell division protein ZapB.